Consider the following 94-residue polypeptide: Small ribosomal subunit protein bS6 (94 aa).

The protein belongs to the bacterial ribosomal protein bS6 family.

In terms of biological role, binds together with bS18 to 16S ribosomal RNA. The protein is Small ribosomal subunit protein bS6 of Clostridium botulinum (strain Kyoto / Type A2).